Reading from the N-terminus, the 511-residue chain is Coatomer subunit delta (511 aa).

A compositionally biased stretch (basic and acidic residues) spans 167 to 177 (QQARRDAERQG). Positions 167–188 (QQARRDAERQGKKAPGFGGFGS) are disordered. A Phosphoserine modification is found at S223. Residues K233 and K241 each carry the N6-acetyllysine modification. At S244 the chain carries Phosphoserine. The 241-residue stretch at 271-511 (MESVHMKIEE…TFLVDKYEIL (241 aa)) folds into the MHD domain. Residues K309 and K351 each carry the N6-acetyllysine modification. A Phosphoserine modification is found at S493.

Belongs to the adaptor complexes medium subunit family. Delta-COP subfamily. In terms of assembly, oligomeric complex that consists of at least the alpha, beta, beta', gamma, delta, epsilon and zeta subunits.

The protein localises to the cytoplasm. It localises to the golgi apparatus membrane. It is found in the cytoplasmic vesicle. Its subcellular location is the COPI-coated vesicle membrane. In terms of biological role, the coatomer is a cytosolic protein complex that binds to dilysine motifs and reversibly associates with Golgi non-clathrin-coated vesicles, which further mediate biosynthetic protein transport from the ER, via the Golgi up to the trans Golgi network. Coatomer complex is required for budding from Golgi membranes, and is essential for the retrograde Golgi-to-ER transport of dilysine-tagged proteins. In mammals, the coatomer can only be recruited by membranes associated to ADP-ribosylation factors (ARFs), which are small GTP-binding proteins; the complex also influences the Golgi structural integrity, as well as the processing, activity, and endocytic recycling of LDL receptors. This chain is Coatomer subunit delta (ARCN1), found in Pongo abelii (Sumatran orangutan).